We begin with the raw amino-acid sequence, 438 residues long: MSVTAKIIPQEIIRLKRDGKILDEQAINGFVSGLVDGNFSDSQVGAMAMAIFQQGMSIDERVNFTKAMMRSGEVLSWEGFDGPIVDKHSTGGVGDKVSFMLAAIVAACGGYVPMISGRGLGHTGGTADKLESIAGFNVQPSISEFKRIVKDVGVAIISQTDNLAPADKRLYSIRDVTATVESIPLITASILSKKLAAGLDVLVMDVKVGNGAMMNNLDDAKALAQSITSVANGAGVKTQAIITDMNQVLGTSAGNAIEMYETVKYLTGKQREPRLHKIVQALASAMLINTNLASSEKDAREKIDKVLNSGLAAEKFDRMVSALGGPKNFIEKPWDSMKKANVITEVRALQHGYIAQTDTRAIGMSVVGLGGGRTAPTQQVDHSVGFDRILPLGVQVNRGEVIARLHAKDEDSANRAIEQFNNAITYSEESPELPPVIY.

It belongs to the thymidine/pyrimidine-nucleoside phosphorylase family. In terms of assembly, homodimer.

The enzyme catalyses thymidine + phosphate = 2-deoxy-alpha-D-ribose 1-phosphate + thymine. The protein operates within pyrimidine metabolism; dTMP biosynthesis via salvage pathway; dTMP from thymine: step 1/2. Its function is as follows. The enzymes which catalyze the reversible phosphorolysis of pyrimidine nucleosides are involved in the degradation of these compounds and in their utilization as carbon and energy sources, or in the rescue of pyrimidine bases for nucleotide synthesis. The protein is Thymidine phosphorylase of Colwellia psychrerythraea (strain 34H / ATCC BAA-681) (Vibrio psychroerythus).